Reading from the N-terminus, the 226-residue chain is Putative ABC transporter ATP-binding protein DR_2469 (226 aa).

The ABC transporter domain occupies 2–225 (IELRHVSHHY…LRVYRERMTW (224 aa)). 33-40 (GSNGSGKS) is an ATP binding site.

This sequence belongs to the ABC transporter superfamily.

The protein localises to the cell membrane. Probably part of an ABC transporter complex. Responsible for energy coupling to the transport system. This is Putative ABC transporter ATP-binding protein DR_2469 from Deinococcus radiodurans (strain ATCC 13939 / DSM 20539 / JCM 16871 / CCUG 27074 / LMG 4051 / NBRC 15346 / NCIMB 9279 / VKM B-1422 / R1).